Reading from the N-terminus, the 435-residue chain is Trigger factor (435 aa).

Residues 163–248 (GELASVTFSA…VHAVKERKMP (86 aa)) enclose the PPIase FKBP-type domain.

The protein belongs to the FKBP-type PPIase family. Tig subfamily.

It is found in the cytoplasm. It carries out the reaction [protein]-peptidylproline (omega=180) = [protein]-peptidylproline (omega=0). Its function is as follows. Involved in protein export. Acts as a chaperone by maintaining the newly synthesized protein in an open conformation. Functions as a peptidyl-prolyl cis-trans isomerase. In Maridesulfovibrio salexigens (strain ATCC 14822 / DSM 2638 / NCIMB 8403 / VKM B-1763) (Desulfovibrio salexigens), this protein is Trigger factor.